A 671-amino-acid polypeptide reads, in one-letter code: tRNA 5-methylaminomethyl-2-thiouridine biosynthesis bifunctional protein MnmC (671 aa).

A tRNA (mnm(5)s(2)U34)-methyltransferase region spans residues 1–245 (MVNVMNTLSF…KREMLWGEKP (245 aa)). The interval 272-671 (VGGGVASLFV…RKLLKGSKVE (400 aa)) is FAD-dependent cmnm(5)s(2)U34 oxidoreductase.

It in the N-terminal section; belongs to the methyltransferase superfamily. tRNA (mnm(5)s(2)U34)-methyltransferase family. The protein in the C-terminal section; belongs to the DAO family. It depends on FAD as a cofactor.

The protein localises to the cytoplasm. It carries out the reaction 5-aminomethyl-2-thiouridine(34) in tRNA + S-adenosyl-L-methionine = 5-methylaminomethyl-2-thiouridine(34) in tRNA + S-adenosyl-L-homocysteine + H(+). Functionally, catalyzes the last two steps in the biosynthesis of 5-methylaminomethyl-2-thiouridine (mnm(5)s(2)U) at the wobble position (U34) in tRNA. Catalyzes the FAD-dependent demodification of cmnm(5)s(2)U34 to nm(5)s(2)U34, followed by the transfer of a methyl group from S-adenosyl-L-methionine to nm(5)s(2)U34, to form mnm(5)s(2)U34. In Actinobacillus pleuropneumoniae serotype 5b (strain L20), this protein is tRNA 5-methylaminomethyl-2-thiouridine biosynthesis bifunctional protein MnmC.